The chain runs to 317 residues: Secreted frizzled-related protein 5 (317 aa).

The first 29 residues, methionine 1–cysteine 29, serve as a signal peptide directing secretion. Residues serine 48–valine 165 form the FZ domain. 8 disulfide bridges follow: cysteine 53-cysteine 116, cysteine 63-cysteine 109, cysteine 100-cysteine 135, cysteine 124-cysteine 162, cysteine 128-cysteine 152, cysteine 181-cysteine 253, cysteine 184-cysteine 255, and cysteine 198-cysteine 303. The NTR domain maps to cysteine 181–cysteine 303.

This sequence belongs to the secreted frizzled-related protein (sFRP) family. Highly expressed in the retinal pigment epithelium (RPE) and pancreas. Weak expression in heart, liver and muscle.

It is found in the secreted. Its function is as follows. Soluble frizzled-related proteins (sFRPS) function as modulators of Wnt signaling through direct interaction with Wnts. They have a role in regulating cell growth and differentiation in specific cell types. SFRP5 may be involved in determining the polarity of photoreceptor, and perhaps, other cells in the retina. This is Secreted frizzled-related protein 5 (SFRP5) from Homo sapiens (Human).